The following is a 356-amino-acid chain: Phospho-N-acetylmuramoyl-pentapeptide-transferase (356 aa).

The next 10 helical transmembrane spans lie at 25 to 45 (TVAAMLTSGLIVFLFGPSIIA), 70 to 90 (GTPTMGGLMILTGIVVSAFLW), 93 to 113 (LSNIYFWVSLFVMLSFGMIGF), 138 to 158 (FLIAIIAAFVLLQVGSSGLAL), 164 to 184 (YFINLSWFFLPFSAFVIVGTG), 195 to 215 (GLAIVPVMVAALSFALIAYLS), 235 to 255 (LAVLLGAVVGAGLGFLWFNAP), 258 to 278 (AIFMGDTGSLALGGLLGIVAV), 284 to 304 (IVLALIGGLFVLEGFSVVIQV), and 333 to 353 (QVVIRFWIISIVLALVGLSTL).

The protein belongs to the glycosyltransferase 4 family. MraY subfamily. It depends on Mg(2+) as a cofactor.

Its subcellular location is the cell inner membrane. The enzyme catalyses UDP-N-acetyl-alpha-D-muramoyl-L-alanyl-gamma-D-glutamyl-meso-2,6-diaminopimeloyl-D-alanyl-D-alanine + di-trans,octa-cis-undecaprenyl phosphate = di-trans,octa-cis-undecaprenyl diphospho-N-acetyl-alpha-D-muramoyl-L-alanyl-D-glutamyl-meso-2,6-diaminopimeloyl-D-alanyl-D-alanine + UMP. Its pathway is cell wall biogenesis; peptidoglycan biosynthesis. Catalyzes the initial step of the lipid cycle reactions in the biosynthesis of the cell wall peptidoglycan: transfers peptidoglycan precursor phospho-MurNAc-pentapeptide from UDP-MurNAc-pentapeptide onto the lipid carrier undecaprenyl phosphate, yielding undecaprenyl-pyrophosphoryl-MurNAc-pentapeptide, known as lipid I. This Bartonella quintana (strain Toulouse) (Rochalimaea quintana) protein is Phospho-N-acetylmuramoyl-pentapeptide-transferase.